Here is a 212-residue protein sequence, read N- to C-terminus: Large ribosomal subunit protein uL3 (212 aa).

Q152 bears the N5-methylglutamine mark.

Belongs to the universal ribosomal protein uL3 family. In terms of assembly, part of the 50S ribosomal subunit. Forms a cluster with proteins L14 and L19. Post-translationally, methylated by PrmB.

One of the primary rRNA binding proteins, it binds directly near the 3'-end of the 23S rRNA, where it nucleates assembly of the 50S subunit. This Chromohalobacter salexigens (strain ATCC BAA-138 / DSM 3043 / CIP 106854 / NCIMB 13768 / 1H11) protein is Large ribosomal subunit protein uL3.